The chain runs to 91 residues: Protein transport protein sft1 (91 aa).

The Cytoplasmic segment spans residues 1-68; it reads MNDQNERRLE…RVVRSAGRRR (68 aa). A helical; Anchor for type IV membrane protein transmembrane segment spans residues 69–86; the sequence is IMTMVLAIVGSILIIYYA. At 87–91 the chain is on the lumenal side; the sequence is SKWFF.

As to quaternary structure, component of a SNARE complex consisting of sed5, gos1, ykt6 and sft1.

It localises to the golgi apparatus membrane. In terms of biological role, vesicle SNARE required for retrograde transport within the Golgi complex. The polypeptide is Protein transport protein sft1 (sft1) (Schizosaccharomyces pombe (strain 972 / ATCC 24843) (Fission yeast)).